A 420-amino-acid polypeptide reads, in one-letter code: Glucose-1-phosphate adenylyltransferase (420 aa).

Alpha-D-glucose 1-phosphate-binding positions include tyrosine 107, glycine 173, 188–189, and serine 206; that span reads EK.

Belongs to the bacterial/plant glucose-1-phosphate adenylyltransferase family. As to quaternary structure, homotetramer.

The enzyme catalyses alpha-D-glucose 1-phosphate + ATP + H(+) = ADP-alpha-D-glucose + diphosphate. It participates in glycan biosynthesis; glycogen biosynthesis. Involved in the biosynthesis of ADP-glucose, a building block required for the elongation reactions to produce glycogen. Catalyzes the reaction between ATP and alpha-D-glucose 1-phosphate (G1P) to produce pyrophosphate and ADP-Glc. This chain is Glucose-1-phosphate adenylyltransferase, found in Shewanella sp. (strain W3-18-1).